Reading from the N-terminus, the 236-residue chain is Biosynthetic peptidoglycan transglycosylase (236 aa).

A helical membrane pass occupies residues G20–P40.

The protein belongs to the glycosyltransferase 51 family.

Its subcellular location is the cell inner membrane. The enzyme catalyses [GlcNAc-(1-&gt;4)-Mur2Ac(oyl-L-Ala-gamma-D-Glu-L-Lys-D-Ala-D-Ala)](n)-di-trans,octa-cis-undecaprenyl diphosphate + beta-D-GlcNAc-(1-&gt;4)-Mur2Ac(oyl-L-Ala-gamma-D-Glu-L-Lys-D-Ala-D-Ala)-di-trans,octa-cis-undecaprenyl diphosphate = [GlcNAc-(1-&gt;4)-Mur2Ac(oyl-L-Ala-gamma-D-Glu-L-Lys-D-Ala-D-Ala)](n+1)-di-trans,octa-cis-undecaprenyl diphosphate + di-trans,octa-cis-undecaprenyl diphosphate + H(+). It participates in cell wall biogenesis; peptidoglycan biosynthesis. Its function is as follows. Peptidoglycan polymerase that catalyzes glycan chain elongation from lipid-linked precursors. This chain is Biosynthetic peptidoglycan transglycosylase, found in Mesorhizobium japonicum (strain LMG 29417 / CECT 9101 / MAFF 303099) (Mesorhizobium loti (strain MAFF 303099)).